A 576-amino-acid polypeptide reads, in one-letter code: Small ribosomal subunit protein mS80 (rPPR6) (576 aa).

A mitochondrion-targeting transit peptide spans 1–76 (MLRSFLCRSQ…SLPADEIPIS (76 aa)). 9 PPR repeats span residues 230–264 (NLEI…GFTP), 265–299 (NAKT…GVLS), 300–336 (EGEQ…SLPP), 341–370 (TLIT…ARRR), 371–405 (GIKP…GPAP), 406–440 (GNAV…GLKP), 441–475 (DVYT…HKKL), 476–510 (SPVT…GVQP), and 511–546 (NADE…GLHL).

The protein belongs to the PPR family. P subfamily. Component of the mitochondrial ribosome small subunit.

The protein resides in the mitochondrion. The sequence is that of Small ribosomal subunit protein mS80 (rPPR6) from Arabidopsis thaliana (Mouse-ear cress).